A 191-amino-acid chain; its full sequence is UMP-CMP kinase 2 (191 aa).

Position 12–17 (12–17 (GSGKGT)) interacts with ATP. Positions 32–62 (SAGDLLRAERQREGSEFGALIESHIKNGSIV) are NMP. Residues arginine 38, 60-62 (SIV), and 88-91 (GFPR) each bind a ribonucleoside 5'-phosphate. Asparagine 95 contacts CMP. Residues 128–136 (NRGQGRTDD) form an LID region. Arginine 129 lines the ATP pocket. A ribonucleoside 5'-phosphate contacts are provided by arginine 133 and arginine 144. Residue arginine 172 coordinates ATP.

This sequence belongs to the adenylate kinase family. UMP-CMP kinase subfamily. As to quaternary structure, monomer. It depends on Mg(2+) as a cofactor. Expressed in neurons and the pharynx.

The protein resides in the cytoplasm. Its subcellular location is the nucleus. The catalysed reaction is CMP + ATP = CDP + ADP. It catalyses the reaction dCMP + ATP = dCDP + ADP. It carries out the reaction UMP + ATP = UDP + ADP. Catalyzes the phosphorylation of pyrimidine nucleoside monophosphates at the expense of ATP. Plays an important role in de novo pyrimidine nucleotide biosynthesis. Has preference for UMP and CMP as phosphate acceptors. This chain is UMP-CMP kinase 2, found in Caenorhabditis elegans.